Reading from the N-terminus, the 625-residue chain is Glucokinase regulatory protein (625 aa).

2 SIS domains span residues 90 to 286 and 320 to 499; these read VQEV…QGIA and VSTS…LLGK. Beta-D-fructose 1-phosphate-binding positions include 109 to 110, E153, and 179 to 181; these read TS and SVG. 109–110 lines the beta-D-fructose 6-phosphate pocket; it reads TS. Position 179–181 (179–181) interacts with beta-D-fructose 6-phosphate; sequence SVG. Residues 199 to 200 are important for interaction with GCK; it reads AV. E348 provides a ligand contact to beta-D-fructose 1-phosphate. Residues 463 to 465 are essential for interaction with GCK; sequence LLF. Residue K514 participates in beta-D-fructose 1-phosphate binding. K514 is a beta-D-fructose 6-phosphate binding site.

It belongs to the GCKR family. In terms of assembly, interacts (fructose 6-phosphate bound form) with GCK. In terms of tissue distribution, found in liver and pancreas. Not detected in muscle, brain, heart, thymus, intestine, uterus, adipose tissue, kidney, adrenal, lung or spleen.

The protein localises to the cytoplasm. The protein resides in the nucleus. Its subcellular location is the mitochondrion. Its function is as follows. Regulates glucokinase (GCK) by forming an inactive complex with this enzyme. Acts by promoting GCK recruitment to the nucleus, possibly to provide a reserve of GCK that can be quickly released in the cytoplasm after a meal. The affinity of GCKR for GCK is modulated by fructose metabolites: GCKR with bound fructose 6-phosphate has increased affinity for GCK, while GCKR with bound fructose 1-phosphate has strongly decreased affinity for GCK and does not inhibit GCK activity. This Homo sapiens (Human) protein is Glucokinase regulatory protein.